The sequence spans 193 residues: UPF0215 protein PH0071 (193 aa).

Belongs to the UPF0215 family.

The chain is UPF0215 protein PH0071 from Pyrococcus horikoshii (strain ATCC 700860 / DSM 12428 / JCM 9974 / NBRC 100139 / OT-3).